The sequence spans 239 residues: Small ribosomal subunit protein uS2c (239 aa).

Belongs to the universal ribosomal protein uS2 family.

It is found in the plastid. In Aneura mirabilis (Parasitic liverwort), this protein is Small ribosomal subunit protein uS2c (rps2).